Consider the following 390-residue polypeptide: Putative gustatory receptor 36c (390 aa).

Residues 1 to 4 (MDLE) lie on the Cytoplasmic side of the membrane. The helical transmembrane segment at 5–25 (SFLLGAVYYYGLFIGLSNFEF) threads the bilayer. Residues 26–36 (DWNTGRVFTKK) lie on the Extracellular side of the membrane. A helical transmembrane segment spans residues 37–57 (WSTLYAIALDSCIFALYIYHW). The Cytoplasmic portion of the chain corresponds to 58 to 75 (TGNTNIVNAIFGRANMLH). A helical transmembrane segment spans residues 76 to 96 (EYVVAILTGLRIVTGLFTLIL). Topologically, residues 97–132 (RWYQRCKMMDLASKVVRMYVARPQVRRMSRWGILTK) are extracellular. A helical transmembrane segment spans residues 133–153 (FIFGSITDGLQMAMVLSAMGS). Over 154-165 (VDSQFYLGLGLQ) the chain is Cytoplasmic. Residues 166-186 (YWMFVILNMAMMQQHMIMLFV) traverse the membrane as a helical segment. Residues 187–254 (RTQFQLINTE…MEEVFGIQGA (68 aa)) are Extracellular-facing. The chain crosses the membrane as a helical span at residues 255 to 275 (MTYGGYYLSSVGTCYLAYSIL). Topologically, residues 276 to 288 (KHGYENLSMTLST) are cytoplasmic. The chain crosses the membrane as a helical span at residues 289-309 (VILAYSWCFFYYLDGMLNLSV). The Extracellular segment spans residues 310-390 (MLHVQDDYWE…FLIQYDIEHF (81 aa)).

The protein belongs to the insect chemoreceptor superfamily. Gustatory receptor (GR) family. Gr22e subfamily. Expressed in neurons of the terminal external chemosensory organ of larvae.

The protein resides in the cell membrane. Probable gustatory receptor which mediates acceptance or avoidance behavior, depending on its substrates. This is Putative gustatory receptor 36c (Gr36c) from Drosophila melanogaster (Fruit fly).